Reading from the N-terminus, the 375-residue chain is Putative monooxygenase Rv1533 (375 aa).

FMN is bound by residues Gln190, Gly195, Gly224, and 243 to 246; that span reads WCGS.

Belongs to the nitronate monooxygenase family. Requires FMN as cofactor.

The polypeptide is Putative monooxygenase Rv1533 (Mycobacterium tuberculosis (strain ATCC 25618 / H37Rv)).